Reading from the N-terminus, the 249-residue chain is Granaticin polyketide synthase putative ketoacyl reductase 2 (249 aa).

12-36 (LVTGSSSGIGQTVAQRLAAEGYRVV) is an NAD(+) binding site. Substrate is bound at residue serine 144. Tyrosine 157 (proton acceptor) is an active-site residue.

Belongs to the short-chain dehydrogenases/reductases (SDR) family.

It functions in the pathway antibiotic biosynthesis; granaticin biosynthesis. The sequence is that of Granaticin polyketide synthase putative ketoacyl reductase 2 (gra-orf6) from Streptomyces violaceoruber.